We begin with the raw amino-acid sequence, 5202 residues long: Usherin (5202 aa).

Positions 1–31 are cleaved as a signal peptide; that stretch reads MNCPVLSLGSGFLFQVIEMLIFAYFASISLT. Topologically, residues 32–5042 are extracellular; it reads ESRGLFPRLE…KSTEFYSELW (5011 aa). Residues 271-517 form the Laminin N-terminal domain; that stretch reads QDFRLYQVAL…AVDEITISGR (247 aa). Asparagine 361 and asparagine 451 each carry an N-linked (GlcNAc...) asparagine glycan. 40 cysteine pairs are disulfide-bonded: cysteine 518–cysteine 527, cysteine 520–cysteine 536, cysteine 538–cysteine 549, cysteine 552–cysteine 572, cysteine 575–cysteine 584, cysteine 577–cysteine 605, cysteine 608–cysteine 617, cysteine 620–cysteine 638, cysteine 641–cysteine 655, cysteine 643–cysteine 662, cysteine 664–cysteine 673, cysteine 676–cysteine 691, cysteine 694–cysteine 708, cysteine 696–cysteine 715, cysteine 717–cysteine 726, cysteine 729–cysteine 744, cysteine 747–cysteine 759, cysteine 749–cysteine 766, cysteine 768–cysteine 777, cysteine 780–cysteine 792, cysteine 795–cysteine 808, cysteine 797–cysteine 815, cysteine 817–cysteine 826, cysteine 829–cysteine 844, cysteine 847–cysteine 861, cysteine 849–cysteine 868, cysteine 870–cysteine 879, cysteine 882–cysteine 897, cysteine 900–cysteine 913, cysteine 902–cysteine 920, cysteine 922–cysteine 931, cysteine 934–cysteine 948, cysteine 951–cysteine 963, cysteine 953–cysteine 970, cysteine 972–cysteine 982, cysteine 985–cysteine 999, cysteine 1002–cysteine 1014, cysteine 1004–cysteine 1021, cysteine 1023–cysteine 1032, and cysteine 1035–cysteine 1050. Laminin EGF-like domains are found at residues 518–574, 575–640, 641–693, 694–746, 747–794, 795–846, 847–899, 900–950, 951–1001, and 1002–1052; these read CQCH…NCKP, CQCN…VCKP, CDCD…GCSP, CNCN…GCEP, CQCN…NCKA, CDCD…LCLP, CNCD…HCQM, CECD…GCLP, CSCH…RCQP, and CNCH…GCSK. 2 N-linked (GlcNAc...) asparagine glycosylation sites follow: asparagine 587 and asparagine 611. Residue asparagine 650 is glycosylated (N-linked (GlcNAc...) asparagine). The N-linked (GlcNAc...) asparagine glycan is linked to asparagine 697. N-linked (GlcNAc...) asparagine glycans are attached at residues asparagine 839, asparagine 856, and asparagine 862. N-linked (GlcNAc...) asparagine glycosylation is present at asparagine 888. A glycan (N-linked (GlcNAc...) asparagine) is linked at asparagine 944. The N-linked (GlcNAc...) asparagine glycan is linked to asparagine 1011. Fibronectin type-III domains are found at residues 1058 to 1146, 1148 to 1244, 1245 to 1363, and 1364 to 1468; these read PPPR…TKPG, PEGN…APPQ, RLSP…SAPV, and FMIP…AAPA. N-linked (GlcNAc...) asparagine glycosylation is found at asparagine 1071, asparagine 1151, and asparagine 1174. Residues asparagine 1379, asparagine 1388, asparagine 1479, and asparagine 1635 are each glycosylated (N-linked (GlcNAc...) asparagine). Laminin G-like domains lie at 1517–1709 and 1714–1891; these read MKGI…WEGC and NEGA…LDGC. An intrachain disulfide couples cysteine 1672 to cysteine 1709. An N-linked (GlcNAc...) asparagine glycan is attached at asparagine 1779. An intrachain disulfide couples cysteine 1862 to cysteine 1891. 14 Fibronectin type-III domains span residues 1869-1955, 1957-2054, 2055-2144, 2145-2239, 2243-2330, 2331-2433, 2437-2531, 2535-2622, 2624-2722, 2726-2819, 2820-2923, 2927-3018, 3022-3112, and 3113-3209; these read TRGA…AAPQ, VPTP…TPQE, APQE…LPPE, HVDS…TDED, GVPA…APPE, GTVN…MPPG, GVLP…TAED, PVVP…TLPG, PEGI…TRPS, GVQP…THPT, VPQN…TLAG, RGAN…TCDG, GMLP…TPSD, and IPTP…CCEE. N-linked (GlcNAc...) asparagine glycosylation is found at asparagine 1903, asparagine 2011, asparagine 2014, asparagine 2048, asparagine 2130, asparagine 2182, asparagine 2195, asparagine 2258, asparagine 2285, asparagine 2322, asparagine 2377, asparagine 2382, asparagine 2407, and asparagine 2413. Residues asparagine 2581, asparagine 2584, asparagine 2656, asparagine 2710, asparagine 2770, and asparagine 2788 are each glycosylated (N-linked (GlcNAc...) asparagine). 5 N-linked (GlcNAc...) asparagine glycosylation sites follow: asparagine 2930, asparagine 2937, asparagine 2970, asparagine 3032, and asparagine 3099. Asparagine 3217, asparagine 3330, asparagine 3419, and asparagine 3433 each carry an N-linked (GlcNAc...) asparagine glycan. Intrachain disulfides connect cysteine 3371-cysteine 3444 and cysteine 3399-cysteine 3425. Fibronectin type-III domains are found at residues 3403–3497, 3501–3589, 3592–3682, 3684–3770, 3774–3865, 3866–3963, 3964–4067, 4068–4153, 4157–4261, 4262–4357, 4358–4445, 4446–4530, 4534–4630, 4636–4733, 4734–4827, and 4828–4927; these read CPAS…TKED, GVSP…TQGV, SILP…AAPE, VWVT…TPMS, EIYP…TPEA, APMD…TLEA, PPQD…SSPS, GLRN…TDEA, SQLA…TLQA, PPEG…AAPS, EVSP…ALPE, NMDS…TSPS, GMEP…TPEI, PPPH…TGPA, PPEG…THPA, and PPSG…SFTT. N-linked (GlcNAc...) asparagine glycosylation is found at asparagine 3653, asparagine 3694, asparagine 3733, asparagine 3780, and asparagine 3849. Asparagine 3984 carries an N-linked (GlcNAc...) asparagine glycan. N-linked (GlcNAc...) asparagine glycans are attached at residues asparagine 4202, asparagine 4226, asparagine 4317, and asparagine 4418. Residues 4518-4541 are disordered; the sequence is ILSPLVKDRTSPSAPSGMEPPKLQ. N-linked (GlcNAc...) asparagine glycosylation is found at asparagine 4564, asparagine 4583, asparagine 4691, asparagine 4754, and asparagine 4800. Asparagine 4943 and asparagine 4950 each carry an N-linked (GlcNAc...) asparagine glycan. The chain crosses the membrane as a helical span at residues 5043 to 5063; sequence FIVLMAMLGLILLAIFLSLIL. The Cytoplasmic segment spans residues 5064–5202; sequence QRKIHKEPYI…ERTTFTDTHL (139 aa). Residues 5200–5202 carry the PDZ-binding motif; sequence THL.

Interacts with collagen IV and fibronectin via its laminin EGF-like domains. Interaction with collagen may be required for stable integration into the basement membrane. Interacts with NINL. Interacts with USH1C. Component of USH2 complex, composed of ADGRV1, PDZD7, USH2A and WHRN. Interacts with ADGRV1/MASS1 (via N-terminal PDZ domain). Interacts (via the cytoplasmic region) with WHRN. Interacts (via the cytoplasmic region) with PDZD7. Interacts (via the cytoplasmic region) with VEZT and MYO7A (via MyTH4-FERM domains); the interaction associates VEZT with the USH2 complex at the stereocilia base. Present in the basement membrane of many, but not all tissues. Expressed in retina, cochlea, small and large intestine, pancreas, bladder, prostate, esophagus, trachea, thymus, salivary glands, placenta, ovary, fallopian tube, uterus and testis. Absent in many other tissues such as heart, lung, liver, kidney and brain. In the retina, it is present in the basement membranes in the Bruch's layer choroid capillary basement membranes, where it localizes just beneath the retinal pigment epithelial cells (at protein level). Weakly expressed. Isoform 2 is expressed in fetal eye, cochlea and heart, and at very low level in brain, CNS, intestine, skeleton, tongue, kidney and lung. Isoform 2 is not expressed in stomach and liver. In adult tissues, isoform 2 is expressed in neural retina and testis, and at low level in brain, heart, kidney and liver. Isoform 1 displays a similar pattern of expression but is expressed at very low level in fetal cochlea.

It is found in the cell projection. It localises to the stereocilium membrane. The protein resides in the secreted. Involved in hearing and vision as member of the USH2 complex. In the inner ear, required for the maintenance of the hair bundle ankle formation, which connects growing stereocilia in developing cochlear hair cells. In retina photoreceptors, the USH2 complex is required for the maintenance of periciliary membrane complex that seems to play a role in regulating intracellular protein transport. The sequence is that of Usherin (USH2A) from Homo sapiens (Human).